Here is a 302-residue protein sequence, read N- to C-terminus: Ribosomal protein L11 methyltransferase (302 aa).

S-adenosyl-L-methionine-binding residues include threonine 155, glycine 176, aspartate 198, and asparagine 239.

This sequence belongs to the methyltransferase superfamily. PrmA family.

The protein resides in the cytoplasm. It catalyses the reaction L-lysyl-[protein] + 3 S-adenosyl-L-methionine = N(6),N(6),N(6)-trimethyl-L-lysyl-[protein] + 3 S-adenosyl-L-homocysteine + 3 H(+). In terms of biological role, methylates ribosomal protein L11. The chain is Ribosomal protein L11 methyltransferase from Caldicellulosiruptor saccharolyticus (strain ATCC 43494 / DSM 8903 / Tp8T 6331).